A 102-amino-acid chain; its full sequence is uncharacterized protein (102 aa).

Positions 1-13 are enriched in low complexity; that stretch reads PSSSQALSVPSLS. Residues 1–24 form a disordered region; the sequence is PSSSQALSVPSLSSEKKTASPTCV.

This is an uncharacterized protein from Human cytomegalovirus (strain AD169) (HHV-5).